The sequence spans 181 residues: Acireductone dioxygenase (181 aa).

Histidine 97, histidine 99, glutamate 103, and histidine 141 together coordinate Fe(2+). 4 residues coordinate Ni(2+): histidine 97, histidine 99, glutamate 103, and histidine 141.

Belongs to the acireductone dioxygenase (ARD) family. Monomer. Fe(2+) is required as a cofactor. Ni(2+) serves as cofactor.

It carries out the reaction 1,2-dihydroxy-5-(methylsulfanyl)pent-1-en-3-one + O2 = 3-(methylsulfanyl)propanoate + CO + formate + 2 H(+). The catalysed reaction is 1,2-dihydroxy-5-(methylsulfanyl)pent-1-en-3-one + O2 = 4-methylsulfanyl-2-oxobutanoate + formate + 2 H(+). It functions in the pathway amino-acid biosynthesis; L-methionine biosynthesis via salvage pathway; L-methionine from S-methyl-5-thio-alpha-D-ribose 1-phosphate: step 5/6. Functionally, catalyzes 2 different reactions between oxygen and the acireductone 1,2-dihydroxy-3-keto-5-methylthiopentene (DHK-MTPene) depending upon the metal bound in the active site. Fe-containing acireductone dioxygenase (Fe-ARD) produces formate and 2-keto-4-methylthiobutyrate (KMTB), the alpha-ketoacid precursor of methionine in the methionine recycle pathway. Ni-containing acireductone dioxygenase (Ni-ARD) produces methylthiopropionate, carbon monoxide and formate, and does not lie on the methionine recycle pathway. In Pseudomonas savastanoi pv. phaseolicola (strain 1448A / Race 6) (Pseudomonas syringae pv. phaseolicola (strain 1448A / Race 6)), this protein is Acireductone dioxygenase.